A 78-amino-acid chain; its full sequence is Kassorin-S (78 aa).

The signal sequence occupies residues Met1 to Ala22. A propeptide spanning residues Asn23 to Arg64 is cleaved from the precursor. The interval Ser24 to Glu60 is disordered. Residues Lys25 to Glu60 show a composition bias toward basic and acidic residues. The residue at position 77 (Leu77) is a Leucine amide.

This sequence belongs to the frog skin active peptide (FSAP) family. Brevinin subfamily. In terms of tissue distribution, expressed by the skin glands.

It is found in the secreted. In terms of biological role, antimicrobial peptide. Active against the Gram-positive bacterium S.aureus (MIC=30 uM) and the yeast C.albicans (MIC=100 uM). Not effective against the Gram-negative bacterium E.coli at concentrations up to 250 uM. Lacks ability to induce contraction of smooth muscle in isolated guinea pig urinary bladder. Elicits histamine release from rat peritoneal mast cells. The chain is Kassorin-S from Kassina senegalensis (Senegal running frog).